A 268-amino-acid chain; its full sequence is Octanoyltransferase (268 aa).

The region spanning 49-237 is the BPL/LPL catalytic domain; sequence GTQGDVILVV…ALLKALSGEL (189 aa). Residues 87-94, 167-169, and 180-182 each bind substrate; these read RGGRITWH, ALG, and GLA. Catalysis depends on Cys198, which acts as the Acyl-thioester intermediate.

It belongs to the LipB family.

Its subcellular location is the cytoplasm. The enzyme catalyses octanoyl-[ACP] + L-lysyl-[protein] = N(6)-octanoyl-L-lysyl-[protein] + holo-[ACP] + H(+). The protein operates within protein modification; protein lipoylation via endogenous pathway; protein N(6)-(lipoyl)lysine from octanoyl-[acyl-carrier-protein]: step 1/2. In terms of biological role, catalyzes the transfer of endogenously produced octanoic acid from octanoyl-acyl-carrier-protein onto the lipoyl domains of lipoate-dependent enzymes. Lipoyl-ACP can also act as a substrate although octanoyl-ACP is likely to be the physiological substrate. The protein is Octanoyltransferase of Corynebacterium aurimucosum (strain ATCC 700975 / DSM 44827 / CIP 107346 / CN-1) (Corynebacterium nigricans).